We begin with the raw amino-acid sequence, 1134 residues long: MPVFHTRTIESILEPVAQQISHLVIMHEEGEVDGKAIPDLTAPVAAVQAAVSNLVRVGKETVQTTEDQILKRDMPPAFIKVENACTKLVQAAQMLQSDPYSVPARDYLIDGSRGILSGTSDLLLTFDEAEVRKIIRVCKGILEYLTVAEVVETMEDLVTYTKNLGPGMTKMAKMIDERQQELTHQEHRVMLVNSMNTVKELLPVLISAMKIFVTTKNSKNQGIEEALKNRNFTVEKMSAEINEIIRVLQLTSWDEDAWASKDTEAMKRALASIDSKLNQAKGWLRDPSASPGDAGEQAIRQILDEAGKVGELCAGKERREILGTCKMLGQMTDQVADLRARGQGSSPVAMQKAQQVSQGLDVLTAKVENAARKLEAMTNSKQSIAKKIDAAQNWLADPNGGPEGEEQIRGALAEARKIAELCDDPKERDDILRSLGEISALTSKLADLRRQGKGDSPEARALAKQVATALQNLQTKTNRAVANSRPAKAAVHLEGKIEQAQRWIDNPTVDDRGVGQAAIRGLVAEGHRLANVMMGPYRQDLLAKCDRVDQLTAQLADLAARGEGESPQARALASQLQDSLKDLKARMQEAMTQEVSDVFSDTTTPIKLLAVAATAPPDAPNREEVFDERAANFENHSGKLGATAEKAAAVGTANKSTVEGIQASVKTARELTPQVVSAARILLRNPGNQAAYEHFETMKNQWIDNVEKMTGLVDEAIDTKSLLDASEEAIKKDLDKCKVAMANIQPQMLVAGATSIARRANRILLVAKREVENSEDPKFREAVKAASDELSKTISPMVMDAKAVAGNISDPGLQKSFLDSGYRILGAVAKVREAFQPQEPDFPPPPPDLEQLRLTDELAPPKPPLPEGEVPPPRPPPPEEKDEEFPEQKAGEVINQPMMMAARQLHDEARKWSSKPGIPAAEVGIGVVAEADAADAAGFPVPPDMEDDYEPELLLMPSNQPVNQPILAAAQSLHREATKWSSKGNDIIAAAKRMALLMAEMSRLVRGGSGTKRALIQCAKDIAKASDEVTRLAKEVAKQCTDKRIRTNLLQVCERIPTISTQLKILSTVKATMLGRTNISDEESEQATEMLVHNAQNLMQSVKETVREAEAASIKIRTDAGFTLRWVRKTPWYQ.

The N-terminal globular head stretch occupies residues 1-835 (MPVFHTRTIE…GAVAKVREAF (835 aa)). A Phosphoserine modification is found at S97. The talin-interaction stretch occupies residues 168-208 (MTKMAKMIDERQQELTHQEHRVMLVNSMNTVKELLPVLISA). K173 bears the N6-acetyllysine mark. 3 consecutive repeat copies span residues 259–369 (ASKD…KVEN), 370–479 (AARK…KTNR), and 480–589 (AVAN…RMQE). The 3 X 112 AA tandem repeats stretch occupies residues 259–589 (ASKDTEAMKR…LKDLKARMQE (331 aa)). Phosphoserine occurs at positions 260, 272, 275, 288, 290, 346, and 434. At K496 the chain carries N6-acetyllysine. At Y537 the chain carries Phosphotyrosine. Phosphoserine occurs at positions 574, 579, and 600. Phosphothreonine occurs at positions 604 and 672. At S721 the chain carries Phosphoserine. Residues 741-764 (MANIQPQMLVAGATSIARRANRIL) form an interaction with ACTN4 region. A phosphoserine mark is found at S795 and S809. Y822 bears the Phosphotyrosine mark. A linker (Pro-rich) region spans residues 836 to 878 (QPQEPDFPPPPPDLEQLRLTDELAPPKPPLPEGEVPPPRPPPP). Positions 857-887 (ELAPPKPPLPEGEVPPPRPPPPEEKDEEFPE) are disordered. Residues 860-876 (PPKPPLPEGEVPPPRPP) show a composition bias toward pro residues. Residues 879-1134 (EEKDEEFPEQ…RWVRKTPWYQ (256 aa)) are C-terminal tail. 2 facilitates phospholipid membrane insertion regions span residues 1003–1046 (RLVR…KRIR) and 1120–1134 (AGFTLRWVRKTPWYQ). Y1133 carries the phosphotyrosine; by SRC-type Tyr-kinases modification.

It belongs to the vinculin/alpha-catenin family. In terms of assembly, exhibits self-association properties. Part of a complex composed of THSD1, PTK2/FAK1, TLN1 and VCL. Interacts with APBB1IP and NRAP. Interacts with TLN1. Interacts with CTNNB1 and this interaction is necessary for its localization to the cell-cell junctions and for its function in regulating cell surface expression of E-cadherin. Interacts with SYNM. Interacts with SORBS1. Interacts with CTNNA1. Binds to ACTN4; this interaction triggers conformational changes. Interacts with FLII. As to quaternary structure, (Microbial infection) Interacts via its globular head domain with the central portion of S.flexneri IcsA (also called VirG). In terms of processing, phosphorylated; on serines, threonines and tyrosines. Phosphorylation on Tyr-1133 in activated platelets affects head-tail interactions and cell spreading but has no effect on actin binding nor on localization to focal adhesion plaques. Post-translationally, acetylated; mainly by myristic acid but also by a small amount of palmitic acid. Metavinculin is muscle-specific.

Its subcellular location is the cell membrane. It is found in the cell junction. The protein localises to the adherens junction. The protein resides in the focal adhesion. It localises to the cytoplasm. Its subcellular location is the cytoskeleton. It is found in the sarcolemma. The protein localises to the cell projection. The protein resides in the podosome. Actin filament (F-actin)-binding protein involved in cell-matrix adhesion and cell-cell adhesion. Regulates cell-surface E-cadherin expression and potentiates mechanosensing by the E-cadherin complex. May also play important roles in cell morphology and locomotion. The protein is Vinculin (VCL) of Homo sapiens (Human).